The primary structure comprises 249 residues: Phosphate import ATP-binding protein PstB (249 aa).

The ABC transporter domain occupies Ile3–Ile244. Gly35 to Ser42 is a binding site for ATP.

This sequence belongs to the ABC transporter superfamily. Phosphate importer (TC 3.A.1.7) family. In terms of assembly, the complex is composed of two ATP-binding proteins (PstB), two transmembrane proteins (PstC and PstA) and a solute-binding protein (PstS).

It is found in the cell inner membrane. It carries out the reaction phosphate(out) + ATP + H2O = ADP + 2 phosphate(in) + H(+). Part of the ABC transporter complex PstSACB involved in phosphate import. Responsible for energy coupling to the transport system. This is Phosphate import ATP-binding protein PstB from Cytophaga hutchinsonii (strain ATCC 33406 / DSM 1761 / CIP 103989 / NBRC 15051 / NCIMB 9469 / D465).